Consider the following 507-residue polypeptide: ATP synthase subunit alpha, chloroplastic (507 aa).

170–177 (GDRQTGKT) provides a ligand contact to ATP.

It belongs to the ATPase alpha/beta chains family. As to quaternary structure, F-type ATPases have 2 components, CF(1) - the catalytic core - and CF(0) - the membrane proton channel. CF(1) has five subunits: alpha(3), beta(3), gamma(1), delta(1), epsilon(1). CF(0) has four main subunits: a, b, b' and c.

It localises to the plastid. The protein localises to the chloroplast thylakoid membrane. The enzyme catalyses ATP + H2O + 4 H(+)(in) = ADP + phosphate + 5 H(+)(out). Its function is as follows. Produces ATP from ADP in the presence of a proton gradient across the membrane. The alpha chain is a regulatory subunit. This Huperzia lucidula (Shining clubmoss) protein is ATP synthase subunit alpha, chloroplastic.